Reading from the N-terminus, the 256-residue chain is Phosphonates import ATP-binding protein PhnC (256 aa).

In terms of domain architecture, ABC transporter spans 2–246; the sequence is LKVIQLDKTY…VLQHIYRQPD (245 aa). Position 35-42 (35-42) interacts with ATP; it reads GPSGAGKT.

This sequence belongs to the ABC transporter superfamily. Phosphonates importer (TC 3.A.1.9.1) family. The complex is composed of two ATP-binding proteins (PhnC), two transmembrane proteins (PhnE) and a solute-binding protein (PhnD).

It localises to the cell membrane. The catalysed reaction is phosphonate(out) + ATP + H2O = phosphonate(in) + ADP + phosphate + H(+). In terms of biological role, part of the ABC transporter complex PhnCDE involved in phosphonates import. Responsible for energy coupling to the transport system. The sequence is that of Phosphonates import ATP-binding protein PhnC from Lactiplantibacillus plantarum (strain ATCC BAA-793 / NCIMB 8826 / WCFS1) (Lactobacillus plantarum).